A 109-amino-acid polypeptide reads, in one-letter code: Protein reprimo (109 aa).

2 N-linked (GlcNAc...) asparagine glycosylation sites follow: N7 and N18. Residues 56-76 (VVQIAVMCVLSLTVVFGIFFL) traverse the membrane as a helical segment. S98 is subject to Phosphoserine.

Belongs to the reprimo family.

It is found in the cytoplasm. The protein resides in the membrane. May be involved in the regulation of p53-dependent G2 arrest of the cell cycle. Seems to induce cell cycle arrest by inhibiting CDK1 activity and nuclear translocation of the CDC2 cyclin B1 complex. The protein is Protein reprimo (Rprm) of Rattus norvegicus (Rat).